The chain runs to 76 residues: Putative antitoxin VapB2 (76 aa).

This sequence belongs to the UPF0330 family.

Its function is as follows. Possibly the antitoxin component of a type II toxin-antitoxin (TA) system. Its cognate toxin is VapC2 (Potential). This chain is Putative antitoxin VapB2 (vapB2), found in Pyrococcus abyssi (strain GE5 / Orsay).